The primary structure comprises 314 residues: Lipoyl synthase (314 aa).

Cysteine 40, cysteine 45, cysteine 51, cysteine 67, cysteine 71, cysteine 74, and serine 280 together coordinate [4Fe-4S] cluster. Residues 53-269 (SERKTATFMI…KNIALEKGFS (217 aa)) form the Radical SAM core domain.

The protein belongs to the radical SAM superfamily. Lipoyl synthase family. [4Fe-4S] cluster is required as a cofactor.

The protein localises to the cytoplasm. It catalyses the reaction [[Fe-S] cluster scaffold protein carrying a second [4Fe-4S](2+) cluster] + N(6)-octanoyl-L-lysyl-[protein] + 2 oxidized [2Fe-2S]-[ferredoxin] + 2 S-adenosyl-L-methionine + 4 H(+) = [[Fe-S] cluster scaffold protein] + N(6)-[(R)-dihydrolipoyl]-L-lysyl-[protein] + 4 Fe(3+) + 2 hydrogen sulfide + 2 5'-deoxyadenosine + 2 L-methionine + 2 reduced [2Fe-2S]-[ferredoxin]. It participates in protein modification; protein lipoylation via endogenous pathway; protein N(6)-(lipoyl)lysine from octanoyl-[acyl-carrier-protein]. In terms of biological role, catalyzes the radical-mediated insertion of two sulfur atoms into the C-6 and C-8 positions of the octanoyl moiety bound to the lipoyl domains of lipoate-dependent enzymes, thereby converting the octanoylated domains into lipoylated derivatives. The chain is Lipoyl synthase from Oceanobacillus iheyensis (strain DSM 14371 / CIP 107618 / JCM 11309 / KCTC 3954 / HTE831).